The following is a 293-amino-acid chain: Elongation factor Ts (293 aa).

The involved in Mg(2+) ion dislocation from EF-Tu stretch occupies residues Thr-79–Val-82.

It belongs to the EF-Ts family.

It localises to the cytoplasm. Functionally, associates with the EF-Tu.GDP complex and induces the exchange of GDP to GTP. It remains bound to the aminoacyl-tRNA.EF-Tu.GTP complex up to the GTP hydrolysis stage on the ribosome. The sequence is that of Elongation factor Ts from Bacillus pumilus (strain SAFR-032).